We begin with the raw amino-acid sequence, 432 residues long: Monoacylglycerol lipase ABHD2 (432 aa).

At 1-14 the chain is on the cytoplasmic side; that stretch reads MNTHESEVYTVAPE. Residues 15 to 35 form a helical; Signal-anchor for type II membrane protein membrane-spanning segment; the sequence is MPAMFDGMKLAAVATVLYVIV. Over 36–432 the chain is Extracellular; that stretch reads RCLNLKSPTA…NQTTCQENTS (397 aa). Residues 132–383 enclose the AB hydrolase-1 domain; sequence TMVICPGIGN…HGGHLGFFEG (252 aa). Asn-141 carries N-linked (GlcNAc...) asparagine glycosylation. The active-site Nucleophile is Ser-212. Asn-225 carries an N-linked (GlcNAc...) asparagine glycan. Catalysis depends on charge relay system residues Asp-346 and His-377. Positions 413–432 are disordered; sequence PPCQSKDAQSNQTTCQENTS. Residues 418–432 show a composition bias toward polar residues; that stretch reads KDAQSNQTTCQENTS. Asn-423 carries N-linked (GlcNAc...) asparagine glycosylation.

Belongs to the AB hydrolase superfamily. AB hydrolase 4 family.

It is found in the cell membrane. The enzyme catalyses Hydrolyzes glycerol monoesters of long-chain fatty acids.. It carries out the reaction an acetyl ester + H2O = an aliphatic alcohol + acetate + H(+). The catalysed reaction is a triacylglycerol + H2O = a diacylglycerol + a fatty acid + H(+). It catalyses the reaction 2-(5Z,8Z,11Z,14Z-eicosatetraenoyl)-glycerol + H2O = glycerol + (5Z,8Z,11Z,14Z)-eicosatetraenoate + H(+). The enzyme catalyses a butanoate ester + H2O = an aliphatic alcohol + butanoate + H(+). It carries out the reaction hexadecanoate ester + H2O = an aliphatic alcohol + hexadecanoate + H(+). Its activity is regulated as follows. Acylglycerol lipase activity is activated upon binding to progesterone. Its function is as follows. Progesterone-dependent acylglycerol lipase that catalyzes hydrolysis of endocannabinoid arachidonoylglycerol (AG) from cell membrane. Acts as a progesterone receptor: progesterone-binding activates the acylglycerol lipase activity, mediating degradation of 1-arachidonoylglycerol (1AG) and 2-arachidonoylglycerol (2AG) to glycerol and arachidonic acid (AA). Also displays an ester hydrolase activity against acetyl ester, butanoate ester and hexadecanoate ester. Plays a key role in sperm capacitation in response to progesterone by mediating degradation of 2AG, an inhibitor of the sperm calcium channel CatSper, leading to calcium influx via CatSper and sperm activation. May also play a role in smooth muscle cells migration. In Danio rerio (Zebrafish), this protein is Monoacylglycerol lipase ABHD2 (abhd2a).